Here is a 131-residue protein sequence, read N- to C-terminus: Small ribosomal subunit protein uS8 (131 aa).

This sequence belongs to the universal ribosomal protein uS8 family. Part of the 30S ribosomal subunit. Contacts proteins S5 and S12.

In terms of biological role, one of the primary rRNA binding proteins, it binds directly to 16S rRNA central domain where it helps coordinate assembly of the platform of the 30S subunit. The protein is Small ribosomal subunit protein uS8 of Campylobacter jejuni subsp. jejuni serotype O:23/36 (strain 81-176).